A 347-amino-acid polypeptide reads, in one-letter code: D-alanine--D-alanine ligase (347 aa).

Positions 131-333 (KRVLESAGIA…YPELIERLVD (203 aa)) constitute an ATP-grasp domain. 161-216 (EEKLAYPVFTKPSNMGSSVGISKSENQEELRQALKLAFRYDSRVLVEQGVNAREIE) contacts ATP. 3 residues coordinate Mg(2+): D287, E300, and N302.

The protein belongs to the D-alanine--D-alanine ligase family. The cofactor is Mg(2+). Mn(2+) serves as cofactor.

Its subcellular location is the cytoplasm. The catalysed reaction is 2 D-alanine + ATP = D-alanyl-D-alanine + ADP + phosphate + H(+). It functions in the pathway cell wall biogenesis; peptidoglycan biosynthesis. Its function is as follows. Cell wall formation. This chain is D-alanine--D-alanine ligase, found in Streptococcus pneumoniae serotype 19F (strain G54).